A 372-amino-acid chain; its full sequence is Protein RecA (372 aa).

Gly77–Thr84 provides a ligand contact to ATP.

It belongs to the RecA family.

It is found in the cytoplasm. Its function is as follows. Can catalyze the hydrolysis of ATP in the presence of single-stranded DNA, the ATP-dependent uptake of single-stranded DNA by duplex DNA, and the ATP-dependent hybridization of homologous single-stranded DNAs. It interacts with LexA causing its activation and leading to its autocatalytic cleavage. This Corynebacterium diphtheriae (strain ATCC 700971 / NCTC 13129 / Biotype gravis) protein is Protein RecA.